Here is a 229-residue protein sequence, read N- to C-terminus: DNA mismatch repair protein MutH (229 aa).

The protein belongs to the MutH family.

It is found in the cytoplasm. In terms of biological role, sequence-specific endonuclease that cleaves unmethylated GATC sequences. It is involved in DNA mismatch repair. This is DNA mismatch repair protein MutH from Shigella flexneri.